Consider the following 283-residue polypeptide: Small aggregate formation protein (283 aa).

It is found in the cytoplasm. Knockout of the gene for this protein causes small aggregate formation. May regulate the secretion or processing of a secreted factor that regulates aggregate size. The sequence is that of Small aggregate formation protein (smlA) from Dictyostelium discoideum (Social amoeba).